The following is an 823-amino-acid chain: MMENYEEIRLGHIRSKDLGNQVPDTTQFYPPTKFDFGAEILASTSTEAEAEAEATATTTEPATSELAGKANGEIKTKTLAAREEQEIGANLEHKTKNPTKSMGEDEDDEEEEEEDDEEEEEDDEEGITGTSNEDEDSSSNCSSSVEPDWKLRWLQREFYTGRVPRQVIASIMPHFATGLAGDTDDSVLWDYLAHLLNEPKRRNKLASVNTFDDVISLVKKSQKIIVLTGAGVSVSCGIPDFRSTNGIYARLAHDFPDLPDPQAMFDINYFKRDPRPFYKFAREIYPGEFQPSPCHRFIKMLETKGKLLRNYTQNIDTLERVAGIQRVIECHGSFSTASCTKCRFKCNADALRADIFAQRIPVCPQCQPNKEQSVDASVAVTEEELRQLVENGIMKPDIVFFGEGLPDEYHTVMATDKDVCDLLIVIGSSLKVRPVAHIPSSIPATVPQILINREQLHHLKFDVELLGDSDVIINQICHRLSDNDDCWRQLCCDESVLTESKELMPPEHSNHHLHHHLLHHRHCSSESERQSQLDTDTQSIKSNSSADYILGSAGTCSDSGFESSTFSCGKRSTAAEAAAIERIKTDILVELNETTALSCDRLGLEGPQTTVESYRHLSIDSSKDSGIEQCDNEATPSYVRPSNLVQETKTVAPSLTPIPQQRGKRQTAAERLQPGTFYSHTNNYSYVFPGAQVFWDNDYSDDDDEEEERSHNRHSDLFGNVGHNYKDDDEDACDLNAVPLSPLLPPSLEAHIVTDIVNGSNEPLPNSSPGQKRTACIIEQQPTPAIETEIPPLKKRRPSEENKQQTQIERSEESPPPGQLAAV.

Positions 41–67 are enriched in low complexity; the sequence is LASTSTEAEAEAEATATTTEPATSELA. The segment at 41 to 146 is disordered; the sequence is LASTSTEAEA…SSSNCSSSVE (106 aa). Residues 72–95 show a composition bias toward basic and acidic residues; sequence GEIKTKTLAAREEQEIGANLEHKT. Residues 104–137 are compositionally biased toward acidic residues; sequence EDEDDEEEEEEDDEEEEEDDEEGITGTSNEDEDS. A Deacetylase sirtuin-type domain is found at 204 to 499; sequence KLASVNTFDD…LCCDESVLTE (296 aa). Residues 229 to 248 and 313 to 316 each bind NAD(+); these read GAGVSVSCGIPDFRSTNGIY and QNID. Catalysis depends on His331, which acts as the Proton acceptor. Zn(2+) contacts are provided by Cys339, Cys342, Cys363, and Cys366. NAD(+)-binding positions include 427–429, 452–454, and Ser469; these read GSS and NRE. Phosphoserine is present on residues Ser618 and Ser621. The span at 698–707 shows a compositional bias: acidic residues; sequence DYSDDDDEEE. Disordered regions lie at residues 698–722 and 777–823; these read DYSDDDDEEEERSHNRHSDLFGNVG and IIEQ…LAAV. Positions 798-813 are enriched in basic and acidic residues; that stretch reads PSEENKQQTQIERSEE. A compositionally biased stretch (pro residues) spans 814 to 823; it reads SPPPGQLAAV.

It belongs to the sirtuin family. Class I subfamily. In terms of assembly, interacts with the transcriptional repressors hairy (hry) and deadpan (dpn); via basic domains. Associates with the Esc/E(z) histone methyltransferase complex. Interacts directly with E(z) and HDAC1/Rpd3. It depends on Zn(2+) as a cofactor.

It is found in the cytoplasm. The protein resides in the nucleus. The protein localises to the chromosome. It catalyses the reaction N(6)-acetyl-L-lysyl-[protein] + NAD(+) + H2O = 2''-O-acetyl-ADP-D-ribose + nicotinamide + L-lysyl-[protein]. Functionally, NAD-dependent histone deacetylase involved in heterochromatic silencing. Mildly suppresses the heterochromatin-mediated silencing phenomenon known as position-effect variegation (PEV). Required for epigenetic silencing of the polycomb group proteins. Has histone H4 deacetylase activity in vitro. Required maternally for establishing proper segmentation of the embryo. Involved in sex determination. May be involved in the regulation of life span. The protein is NAD-dependent histone deacetylase sirtuin-1 of Drosophila melanogaster (Fruit fly).